The sequence spans 222 residues: Pectate lyase A (222 aa).

Positions 1–25 are cleaved as a signal peptide; that stretch reads MKKMLTLLLSAGLVASIFGVMPAAA.

The protein belongs to the polysaccharide lyase 3 family. Ca(2+) is required as a cofactor.

The protein resides in the secreted. It catalyses the reaction Eliminative cleavage of (1-&gt;4)-alpha-D-galacturonan to give oligosaccharides with 4-deoxy-alpha-D-galact-4-enuronosyl groups at their non-reducing ends.. The enzyme catalyses Eliminative cleavage of (1-&gt;4)-alpha-D-galacturonan methyl ester to give oligosaccharides with 4-deoxy-6-O-methyl-alpha-D-galact-4-enuronosyl groups at their non-reducing ends.. It functions in the pathway glycan metabolism; pectin degradation; 2-dehydro-3-deoxy-D-gluconate from pectin: step 2/5. Its activity is regulated as follows. Strongly inhibited by Ba(2+). To a lesser extent, is also inhibited by Sn(2+), Mg(2+) and Ag(+). Inhibited by EDTA in vitro. In terms of biological role, catalyzes the depolymerization of both polygalacturonate and pectins of methyl esterification degree from 22 to 89%, with an endo mode of action. In contrast to the majority of pectate lyases, displays high activity on highly methylated pectins. Is not able to cleave trigalacturonate. Does not degrade xylans and carboxymethylcellulose (CMC). This is Pectate lyase A (pelA) from Paenibacillus barcinonensis.